A 358-amino-acid chain; its full sequence is Peptide chain release factor 1 (358 aa).

Position 233 is an N5-methylglutamine (Gln-233).

The protein belongs to the prokaryotic/mitochondrial release factor family. Post-translationally, methylated by PrmC. Methylation increases the termination efficiency of RF1.

The protein localises to the cytoplasm. Functionally, peptide chain release factor 1 directs the termination of translation in response to the peptide chain termination codons UAG and UAA. The protein is Peptide chain release factor 1 of Clostridium botulinum (strain Okra / Type B1).